A 471-amino-acid polypeptide reads, in one-letter code: Citrate synthase, mitochondrial (471 aa).

The transit peptide at Met1–Gly18 directs the protein to the mitochondrion. Catalysis depends on residues His307, His353, and Asp408.

The protein belongs to the citrate synthase family. Homodimer.

Its subcellular location is the mitochondrion matrix. It carries out the reaction oxaloacetate + acetyl-CoA + H2O = citrate + CoA + H(+). The protein operates within carbohydrate metabolism; tricarboxylic acid cycle; isocitrate from oxaloacetate: step 1/2. The polypeptide is Citrate synthase, mitochondrial (CIT) (Citrus maxima (Pomelo)).